The following is a 208-amino-acid chain: Thymidylate kinase (208 aa).

An ATP-binding site is contributed by 10-17 (GPEGSGKT).

Belongs to the thymidylate kinase family.

The catalysed reaction is dTMP + ATP = dTDP + ADP. Its function is as follows. Phosphorylation of dTMP to form dTDP in both de novo and salvage pathways of dTTP synthesis. The sequence is that of Thymidylate kinase from Bacillus cereus (strain Q1).